The primary structure comprises 431 residues: MTVLTNSLTEVAQQTRQAAIQLAGASTETKNQALEAVAQALEAATPEILEANVQDCQQAKAAGIANALYARLKLDATKLKGAIAGVRSVATLEDPVGTVQLKRELDTDLVLSRVSCPLGVLGVIFEARPDAVMQIAALAMKSGNGVLLKGGQEALHSCQALVKAIHQGLSNTAVSPNVVALLTSREETLELLNLDQDVNLIIPRGSNDFVRFVQENTRIPVLGHAEGICHLYVDQAAKLDQAVEIAVDSKIQYPAACNAVETILVHDAIAPQYLPKLTAALQDNHVKVLGDAKTQAIVDVGPATETDWATEYGDLIVSIKVVASLSDAIAHINQYGSGHTDAIATEDDQAAAVFMNQVDAAGVFHNCSTRFADGFRYGFGAEVGISTQRMPPRGPVGLEGLVTYKYQLKGQGQIVATYAGSDARPFTHKDL.

It belongs to the gamma-glutamyl phosphate reductase family.

It is found in the cytoplasm. The catalysed reaction is L-glutamate 5-semialdehyde + phosphate + NADP(+) = L-glutamyl 5-phosphate + NADPH + H(+). The protein operates within amino-acid biosynthesis; L-proline biosynthesis; L-glutamate 5-semialdehyde from L-glutamate: step 2/2. Catalyzes the NADPH-dependent reduction of L-glutamate 5-phosphate into L-glutamate 5-semialdehyde and phosphate. The product spontaneously undergoes cyclization to form 1-pyrroline-5-carboxylate. This is Gamma-glutamyl phosphate reductase from Acaryochloris marina (strain MBIC 11017).